Here is a 975-residue protein sequence, read N- to C-terminus: 26S proteasome non-ATPase regulatory subunit 1 (975 aa).

The interval 272–303 is disordered; it reads EKKSTTTTTTTPASDSMEIDIDSGNEKSGGSS. PC repeat units follow at residues 393-426, 431-464, 465-499, 500-534, 536-569, 570-605, 606-638, 640-674, 675-715, and 718-748; these read SAIS…NQTP, GSLY…ILHH, GASL…VSGE, AAGL…EKTI, SLSM…LIRY, GGMY…SVRR, AAVT…PHVR, GAAF…YVKQ, AAWI…DSMS, and GAVL…NMNA. Disordered stretches follow at residues 832–882 and 922–975; these read SSRS…KSNP and PEQL…EFTE. Composition is skewed to basic and acidic residues over residues 842–880 and 926–935; these read DVEK…ERKS and VVKEKPETKQ. Residues 944-961 are compositionally biased toward low complexity; sequence TATATASLPNATTTTSPT.

The protein belongs to the proteasome subunit S1 family.

Functionally, acts as a regulatory subunit of the 26 proteasome which is involved in the ATP-dependent degradation of ubiquitinated proteins. The polypeptide is 26S proteasome non-ATPase regulatory subunit 1 (psmD1) (Dictyostelium discoideum (Social amoeba)).